Here is an 82-residue protein sequence, read N- to C-terminus: M-zodatoxin-Lt3b (82 aa).

A signal peptide spans 1–22; the sequence is MKTYAVLLALVVAFVCIAESTG. Positions 23 to 61 are excised as a propeptide; sequence YPVEDLEDDELTELEAEALLEDLLEDLELEDLDYNEEAR. The short motif at 58–61 is the Processing quadruplet motif element; sequence EEAR. Alanine 81 is subject to Alanine amide.

Post-translationally, cleavage of the propeptide depends on the processing quadruplet motif (XXXR, with at least one of X being E). Expressed by the venom gland.

Its subcellular location is the secreted. In terms of biological role, it has antimicrobial activity against Gram-positive bacteria (A.globiformis VKM Ac-1112 (MIC=0.7 uM), and B.subtilis VKM B-501 (MIC=2.9 uM)), Gram-negative bacteria (E.coli DH5-alpha (MIC=23 uM), E.coli MH1 (MIC=28 uM), and P.aeruginosa PAO1 (MIC&gt;45 uM)), and yeasts (P.pastoris GS115 (MIC=23 uM), and S.cerevisiae Y190 (MIC=23 uM)). Does not have hemolytic against rabbit erythrocytes. Causes paralysis, but is not lethal when injected into insect (M.domestica) larvae. This chain is M-zodatoxin-Lt3b, found in Lachesana tarabaevi (Spider).